Consider the following 89-residue polypeptide: uncharacterized protein (89 aa).

This is an uncharacterized protein from Methanocaldococcus jannaschii (strain ATCC 43067 / DSM 2661 / JAL-1 / JCM 10045 / NBRC 100440) (Methanococcus jannaschii).